The following is a 249-amino-acid chain: MRILISNDDGVTAPGIAALHAALVDYAECAVIAPDQDKSGASSSLTLDRPLHPQTLANGFISLNGTPTDCVHLGLNGLLPQTPDMVVSGINLGANLGDDVLYSGTVAAALEGRFLGGTSLAFSLLSRQPDNLPTAAYIARRLVEAQSRLVLPPRTVLNVNIPNLPLEHIRGIQLTRLGHRARAAAPTKVVNPRGKEGYWIAVAGDAEDGGPGTDFHAVMQGYVSITPLQLDRTFNDAFEQLDGWLEGLL.

A divalent metal cation contacts are provided by Asp-8, Asp-9, Ser-39, and Asn-91.

Belongs to the SurE nucleotidase family. Requires a divalent metal cation as cofactor.

It is found in the cytoplasm. It carries out the reaction a ribonucleoside 5'-phosphate + H2O = a ribonucleoside + phosphate. Nucleotidase that shows phosphatase activity on nucleoside 5'-monophosphates. This chain is 5'-nucleotidase SurE, found in Pseudomonas putida (strain ATCC 700007 / DSM 6899 / JCM 31910 / BCRC 17059 / LMG 24140 / F1).